The primary structure comprises 87 residues: Probable Fe(2+)-trafficking protein (87 aa).

This sequence belongs to the Fe(2+)-trafficking protein family.

Functionally, could be a mediator in iron transactions between iron acquisition and iron-requiring processes, such as synthesis and/or repair of Fe-S clusters in biosynthetic enzymes. This is Probable Fe(2+)-trafficking protein from Francisella tularensis subsp. novicida (strain U112).